A 376-amino-acid chain; its full sequence is 23S rRNA (uracil(747)-C(5))-methyltransferase RlmC (376 aa).

Residues Cys3, Cys11, Cys14, and Cys87 each contribute to the [4Fe-4S] cluster site. Residues Gln212, Phe241, Glu262, and Asn307 each contribute to the S-adenosyl-L-methionine site. Cys334 acts as the Nucleophile in catalysis.

Belongs to the class I-like SAM-binding methyltransferase superfamily. RNA M5U methyltransferase family. RlmC subfamily.

The enzyme catalyses uridine(747) in 23S rRNA + S-adenosyl-L-methionine = 5-methyluridine(747) in 23S rRNA + S-adenosyl-L-homocysteine + H(+). In terms of biological role, catalyzes the formation of 5-methyl-uridine at position 747 (m5U747) in 23S rRNA. The protein is 23S rRNA (uracil(747)-C(5))-methyltransferase RlmC of Citrobacter koseri (strain ATCC BAA-895 / CDC 4225-83 / SGSC4696).